The sequence spans 82 residues: Small ribosomal subunit protein eS17 (82 aa).

This sequence belongs to the eukaryotic ribosomal protein eS17 family.

The protein is Small ribosomal subunit protein eS17 of Sulfolobus acidocaldarius (strain ATCC 33909 / DSM 639 / JCM 8929 / NBRC 15157 / NCIMB 11770).